A 93-amino-acid polypeptide reads, in one-letter code: Exodeoxyribonuclease 7 small subunit (93 aa).

The segment at 1-22 is disordered; it reads MAKTASPGATPPGNGAEPLPDN.

It belongs to the XseB family. Heterooligomer composed of large and small subunits.

The protein resides in the cytoplasm. The catalysed reaction is Exonucleolytic cleavage in either 5'- to 3'- or 3'- to 5'-direction to yield nucleoside 5'-phosphates.. Its function is as follows. Bidirectionally degrades single-stranded DNA into large acid-insoluble oligonucleotides, which are then degraded further into small acid-soluble oligonucleotides. In Burkholderia multivorans (strain ATCC 17616 / 249), this protein is Exodeoxyribonuclease 7 small subunit.